We begin with the raw amino-acid sequence, 94 residues long: Phosphoribosyl-ATP pyrophosphatase (94 aa).

The protein belongs to the PRA-PH family.

It is found in the cytoplasm. The catalysed reaction is 1-(5-phospho-beta-D-ribosyl)-ATP + H2O = 1-(5-phospho-beta-D-ribosyl)-5'-AMP + diphosphate + H(+). It functions in the pathway amino-acid biosynthesis; L-histidine biosynthesis; L-histidine from 5-phospho-alpha-D-ribose 1-diphosphate: step 2/9. This Saccharolobus islandicus (strain M.16.27) (Sulfolobus islandicus) protein is Phosphoribosyl-ATP pyrophosphatase.